Reading from the N-terminus, the 1012-residue chain is Structural polyprotein (1012 aa).

Asp-30 lines the a divalent metal cation pocket. Residues 513-755 (ADKGYEVVAN…AGRQYHLAMA (243 aa)) form the Peptidase S50 domain. Ser-652 functions as the Nucleophile in the catalytic mechanism. Residue Lys-692 is part of the active site. The tract at residues 969–1012 (AMELKHRNPRRAPPKPKPKPNAPTQRPPGRLGRWIRTVSDEDLE) is disordered. Residues 975–986 (RNPRRAPPKPKP) are compositionally biased toward basic residues. The interaction with VP1 protein stretch occupies residues 1003–1012 (IRTVSDEDLE).

Homotrimer. A central divalent metal stabilizes the VP2 trimer. Interacts with host ITGA4/ITGB1. As to quaternary structure, homodimer. Interacts (via C-terminus) with VP1 in the cytoplasm. Interacts with VP2. In terms of processing, specific enzymatic cleavages yield mature proteins. The capsid assembly seems to be regulated by polyprotein processing. The protease VP4 cleaves itself off the polyprotein, thus releasing pre-VP2 and VP3 within the infected cell. During capsid assembly, the C-terminus of pre-VP2 is further processed by VP4, giving rise to VP2, the external capsid protein and three small peptides that all stay closely associated with the capsid.

It localises to the virion. The protein localises to the host cytoplasm. Capsid protein VP2 self assembles to form an icosahedral capsid with a T=13 symmetry, about 70 nm in diameter, and consisting of 260 VP2 trimers. The capsid encapsulates the genomic dsRNA. VP2 is also involved in attachment and entry into the host cell by interacting with host ITGA4/ITGB1. Functionally, the precursor of VP2 plays an important role in capsid assembly. First, pre-VP2 and VP2 oligomers assemble to form a procapsid. Then, the pre-VP2 intermediates may be processed into VP2 proteins by proteolytic cleavage mediated by VP4 to obtain the mature virion. The final capsid is composed of pentamers and hexamers but VP2 has a natural tendency to assemble into all-pentameric structures. Therefore pre-VP2 may be required to allow formation of the hexameric structures. In terms of biological role, protease VP4 is a serine protease that cleaves the polyprotein into its final products. Pre-VP2 is first partially cleaved, and may be completely processed by VP4 upon capsid maturation. Its function is as follows. Capsid protein VP3 plays a key role in virion assembly by providing a scaffold for the capsid made of VP2. May self-assemble to form a T=4-like icosahedral inner-capsid composed of at least 180 trimers. Plays a role in genomic RNA packaging by recruiting VP1 into the capsid and interacting with the dsRNA genome segments to form a ribonucleoprotein complex. Additionally, the interaction of the VP3 C-terminal tail with VP1 removes the inherent structural blockade of the polymerase active site. Thus, VP3 can also function as a transcriptional activator. Structural peptide 1 is a small peptide derived from pre-VP2 C-terminus. It destabilizes and perforates cell membranes, suggesting a role during entry. Functionally, structural peptide 2 is a small peptide derived from pVP2 C-terminus. It is not essential for the virus viability, but viral growth is affected when missing. In terms of biological role, structural peptide 3 is a small peptide derived from pVP2 C-terminus. It is not essential for the virus viability, but viral growth is affected when missing. Its function is as follows. Structural peptide 4 is a small peptide derived from pVP2 C-terminus. It is essential for the virus viability. The protein is Structural polyprotein of Avian infectious bursal disease virus (strain STC) (IBDV).